A 111-amino-acid polypeptide reads, in one-letter code: Probable 4-amino-4-deoxy-L-arabinose-phosphoundecaprenol flippase subunit ArnE (111 aa).

Residues 1-35 (MIWLTLVFASLLSVAGQLCQKQATCFVAINKRRKH) lie on the Cytoplasmic side of the membrane. Residues 36–56 (IVLWLGLALACLGLAMVLWLL) traverse the membrane as a helical segment. Residues 40–109 (LGLALACLGL…IIGGIVILGS (70 aa)) form the EamA domain. Residues 57–60 (VLQN) lie on the Periplasmic side of the membrane. Residues 61–81 (VPVGIAYPMLSLNFVWVTLAA) traverse the membrane as a helical segment. At 82–87 (VKLWHE) the chain is on the cytoplasmic side. A helical membrane pass occupies residues 88-108 (PVSPRHWCGVAFIIGGIVILG). Residues 109–111 (STV) lie on the Periplasmic side of the membrane.

The protein belongs to the ArnE family. As to quaternary structure, heterodimer of ArnE and ArnF.

The protein resides in the cell inner membrane. It participates in bacterial outer membrane biogenesis; lipopolysaccharide biosynthesis. Functionally, translocates 4-amino-4-deoxy-L-arabinose-phosphoundecaprenol (alpha-L-Ara4N-phosphoundecaprenol) from the cytoplasmic to the periplasmic side of the inner membrane. The chain is Probable 4-amino-4-deoxy-L-arabinose-phosphoundecaprenol flippase subunit ArnE from Escherichia coli (strain ATCC 8739 / DSM 1576 / NBRC 3972 / NCIMB 8545 / WDCM 00012 / Crooks).